The sequence spans 1079 residues: Integrator complex subunit 3 homolog (1079 aa).

Disordered stretches follow at residues 539–574, 925–949, and 1010–1079; these read ESSERETEAVFSDDDGENIARCNKNDENTDDDDDLP, YPSSSPNKRKRPSKGSSAASSTPSA, and AVGR…NDSD. A compositionally biased stretch (low complexity) spans 938–949; sequence KGSSAASSTPSA. A phosphoserine mark is found at serine 1049, serine 1050, serine 1054, and serine 1055. Over residues 1062-1073 the composition is skewed to basic residues; sequence HKITQAAKKRKK.

It belongs to the Integrator subunit 3 family. Belongs to the multiprotein complex Integrator, at least composed of IntS1, IntS2, IntS3, IntS4, omd/IntS5, IntS6, defl/IntS7, IntS8, IntS9, IntS10, IntS11, IntS12, asun/IntS13, IntS14 and IntS15. The core complex associates with protein phosphatase 2A subunits mts/PP2A and Pp2A-29B, to form the Integrator-PP2A (INTAC) complex.

The protein localises to the nucleus. It localises to the cytoplasm. Component of the integrator complex, a multiprotein complex that terminates RNA polymerase II (Pol II) transcription in the promoter-proximal region of genes. The integrator complex provides a quality checkpoint during transcription elongation by driving premature transcription termination of transcripts that are unfavorably configured for transcriptional elongation: the complex terminates transcription by (1) catalyzing dephosphorylation of the C-terminal domain (CTD) of Pol II subunit Polr2A/Rbp1 and Spt5, and (2) degrading the exiting nascent RNA transcript via endonuclease activity. The integrator complex is also involved in the 3'-end processing of the U7 snRNA, and also the spliceosomal snRNAs U1, U2, U4 and U5. The protein is Integrator complex subunit 3 homolog (IntS3) of Drosophila virilis (Fruit fly).